The primary structure comprises 330 residues: Aspartate--ammonia ligase (330 aa).

It belongs to the class-II aminoacyl-tRNA synthetase family. AsnA subfamily.

The protein resides in the cytoplasm. The enzyme catalyses L-aspartate + NH4(+) + ATP = L-asparagine + AMP + diphosphate + H(+). Its pathway is amino-acid biosynthesis; L-asparagine biosynthesis; L-asparagine from L-aspartate (ammonia route): step 1/1. The chain is Aspartate--ammonia ligase from Escherichia coli O45:K1 (strain S88 / ExPEC).